The primary structure comprises 77 residues: MKLTCVMIVAVLLLTACQLITADDSRGTQKHRSLRSTTKVSKSTSCMEAGSYCGSTTRICCGYCAYFGKKCIDYPSN.

A signal peptide spans Met1 to Ala22. The propeptide occupies Asp23–Lys42. 3 cysteine pairs are disulfide-bonded: Cys46–Cys61, Cys53–Cys64, and Cys60–Cys71.

Belongs to the conotoxin O1 superfamily. In terms of tissue distribution, expressed by the venom duct.

It is found in the secreted. In terms of biological role, omega-conotoxins act at presynaptic membranes, they bind and block voltage-gated calcium channels (Cav). This is Omega-conotoxin-like SO-5 (SO5) from Conus striatus (Striated cone).